The primary structure comprises 148 residues: UPF0178 protein lpg0089 (148 aa).

This sequence belongs to the UPF0178 family.

In Legionella pneumophila subsp. pneumophila (strain Philadelphia 1 / ATCC 33152 / DSM 7513), this protein is UPF0178 protein lpg0089.